Consider the following 98-residue polypeptide: NADH-ubiquinone oxidoreductase chain 4L (98 aa).

Transmembrane regions (helical) follow at residues 1 to 21 (MSMVYINLFLAFIMSLMGLLV), 29 to 49 (SLLCLEGMMLSLFIMISITIL), and 61 to 81 (IILLVFAACEAALGLSLLVMV).

This sequence belongs to the complex I subunit 4L family. As to quaternary structure, core subunit of respiratory chain NADH dehydrogenase (Complex I) which is composed of 45 different subunits.

It is found in the mitochondrion inner membrane. The catalysed reaction is a ubiquinone + NADH + 5 H(+)(in) = a ubiquinol + NAD(+) + 4 H(+)(out). Functionally, core subunit of the mitochondrial membrane respiratory chain NADH dehydrogenase (Complex I) which catalyzes electron transfer from NADH through the respiratory chain, using ubiquinone as an electron acceptor. Part of the enzyme membrane arm which is embedded in the lipid bilayer and involved in proton translocation. The sequence is that of NADH-ubiquinone oxidoreductase chain 4L (MT-ND4L) from Mephitis mephitis (Striped skunk).